The sequence spans 380 residues: Beta sliding clamp (380 aa).

This sequence belongs to the beta sliding clamp family. As to quaternary structure, forms a ring-shaped head-to-tail homodimer around DNA which binds and tethers DNA polymerases and other proteins to the DNA. The DNA replisome complex has a single clamp-loading complex (3 tau and 1 each of delta, delta', psi and chi subunits) which binds 3 Pol III cores (1 core on the leading strand and 2 on the lagging strand) each with a beta sliding clamp dimer. Additional proteins in the replisome are other copies of gamma, psi and chi, Ssb, DNA helicase and RNA primase.

The protein localises to the cytoplasm. Confers DNA tethering and processivity to DNA polymerases and other proteins. Acts as a clamp, forming a ring around DNA (a reaction catalyzed by the clamp-loading complex) which diffuses in an ATP-independent manner freely and bidirectionally along dsDNA. Initially characterized for its ability to contact the catalytic subunit of DNA polymerase III (Pol III), a complex, multichain enzyme responsible for most of the replicative synthesis in bacteria; Pol III exhibits 3'-5' exonuclease proofreading activity. The beta chain is required for initiation of replication as well as for processivity of DNA replication. This Mycoplasma genitalium (strain ATCC 33530 / DSM 19775 / NCTC 10195 / G37) (Mycoplasmoides genitalium) protein is Beta sliding clamp (dnaN).